The following is a 363-amino-acid chain: L-arabinitol 4-dehydrogenase (363 aa).

8 residues coordinate Zn(2+): cysteine 53, histidine 78, glutamate 79, cysteine 108, cysteine 111, cysteine 114, cysteine 122, and glutamate 163. NAD(+) contacts are provided by residues 190–191, aspartate 211, arginine 216, isoleucine 282, and 306–308; these read PI and QYR.

It belongs to the zinc-containing alcohol dehydrogenase family. As to quaternary structure, homotetramer. Requires Zn(2+) as cofactor.

The enzyme catalyses L-arabinitol + NAD(+) = L-xylulose + NADH + H(+). The protein operates within carbohydrate degradation; L-arabinose degradation via L-arabinitol; D-xylulose 5-phosphate from L-arabinose (fungal route): step 2/5. In terms of biological role, catalyzes the NAD-dependent oxidation of L-arabinitol to L-xylulose in the fungal L-arabinose catabolic pathway. L-arabinose catabolism is important for using plant material as a carbon source. Not active on D-arabinitol, D-sorbitol and D-mannitol. The chain is L-arabinitol 4-dehydrogenase (ard-1) from Neurospora crassa (strain ATCC 24698 / 74-OR23-1A / CBS 708.71 / DSM 1257 / FGSC 987).